Reading from the N-terminus, the 481-residue chain is uncharacterized protein (481 aa).

The next 11 helical transmembrane spans lie at 14 to 34 (LGFCSVVMLGINSIIGAGIFL), 46 to 66 (FAPMAYVLAGIFAGVVAIVFA), 90 to 110 (IGIYVGVTHAITASIAWGVLA), 134 to 154 (FSVKTLTFLGFIGVLLAINLF), 167 to 187 (TVGKAFALSAFIVGGLWIITT), 218 to 238 (FSSMALATIVALYAFTGFESI), 258 to 278 (IAIFSVGAIYLLTLTVAMLLG), 303 to 323 (IIVVGALISMFGINVAASFGA), 377 to 397 (LAVIARFVQFIIVPIALIALA), 411 to 431 (AFTDKVLPLVAIVVSVGLAVS), and 446 to 466 (YFSIALIVITFIVVPAMAYLH).

Belongs to the amino acid-polyamine-organocation (APC) superfamily.

It localises to the cell membrane. In terms of biological role, probable amino-acid or metabolite transport protein. This is an uncharacterized protein from Mycobacterium tuberculosis (strain CDC 1551 / Oshkosh).